The primary structure comprises 145 residues: Anaerobic nitrite reductase NSHB5 (145 aa).

Residues 2 to 142 (GFSETQEELV…LAAAIKEEMK (141 aa)) form the Globin domain. The Homodimerization motif lies at 35-39 (EIAPA). Residues serine 45, histidine 59, lysine 61, arginine 84, threonine 88, and histidine 89 each coordinate heme b. Residues 96–108 (DAYFEVVKTALLD) carry the Homodimerization motif.

The protein belongs to the plant globin family. As to quaternary structure, homodimer. It depends on heme b as a cofactor. In terms of tissue distribution, expressed in embryonic (embryos, coleoptiles and seminal roots) and vegetative (leaves and roots) organs.

The protein localises to the cytoplasm. It is found in the nucleus. It catalyses the reaction Fe(III)-heme b-[protein] + nitric oxide + H2O = Fe(II)-heme b-[protein] + nitrite + 2 H(+). Functionally, phytoglobin that reduces nitrite to nitric oxide under anoxic conditions (e.g. during flooding or in waterlogged soil). May not function as an oxygen storage or transport protein. Has an unusually high affinity for O(2) through an hexacoordinate heme iron because of a very low dissociation constant. The polypeptide is Anaerobic nitrite reductase NSHB5 (Oryza sativa subsp. japonica (Rice)).